The following is a 342-amino-acid chain: P2Y purinoceptor 12 (342 aa).

At 1 to 27 (MQAIDNLTSAPGNTSLCTRDYKITQVL) the chain is on the extracellular side. Residues Asn6 and Asn13 are each glycosylated (N-linked (GlcNAc...) asparagine). Disulfide bonds link Cys17–Cys270 and Cys97–Cys175. A helical membrane pass occupies residues 28-50 (FPLLYTVLFFVGLITNSLAMRIF). Over 51 to 61 (FQIRSKSNFII) the chain is Cytoplasmic. 2 positions are modified to phosphoserine: Ser55 and Ser57. Residues 62-82 (FLKNTVISDLLMILTFPFKIL) traverse the membrane as a helical segment. At 83 to 97 (SDAKLGAGPLRTFVC) the chain is on the extracellular side. ADP is bound by residues Arg93, Cys97, and Tyr105. Residues 98–118 (QVTSVIFYFTMYISISFLGLI) traverse the membrane as a helical segment. Residues 119-142 (TIDRYQKTTRPFKTSNPKNLLGAK) lie on the Cytoplasmic side of the membrane. The helical transmembrane segment at 143–162 (ILSVLIWAFMFLLSLPNMIL) threads the bilayer. ADP is bound by residues 156–159 (SLPN), 175–179 (CSFLK), His187, and Asn191. Residues 163-185 (TNRRPRDKNVKKCSFLKSEFGLV) are Extracellular-facing. Residues 186-207 (WHEIVNYICQVIFWINFLIVIV) form a helical membrane-spanning segment. Topologically, residues 208 to 233 (CYTLITKELYRSYVRTRGVGKVPRKK) are cytoplasmic. A helical transmembrane segment spans residues 234–259 (VNVKVFIIIAVFFICFVPFHFARIPY). Residues 256-259 (RIPY), Gln263, and Lys280 each bind ADP. The Extracellular portion of the chain corresponds to 260–278 (TLSQTRDVFDCAAENTLFY). The chain crosses the membrane as a helical span at residues 279–298 (VKESTLWLTSLNACLDPFIY). At 299-342 (FFLCKSFRNSLISMLKCPNSATSQSQDNRKKEQDGGDPNEETPM) the chain is on the cytoplasmic side. A disordered region spans residues 317 to 342 (NSATSQSQDNRKKEQDGGDPNEETPM). Acidic residues predominate over residues 333 to 342 (GGDPNEETPM).

This sequence belongs to the G-protein coupled receptor 1 family.

Its subcellular location is the cell membrane. Functionally, receptor for ADP and ATP coupled to G-proteins that inhibit the adenylyl cyclase second messenger system. Required for normal platelet aggregation and blood coagulation. The polypeptide is P2Y purinoceptor 12 (P2RY12) (Macaca fascicularis (Crab-eating macaque)).